The sequence spans 349 residues: 5-deoxyribose 1-phosphate isomerase (349 aa).

Residues 49–51, arginine 92, and glutamine 199 contribute to the substrate site; that span reads RGA. Aspartate 240 acts as the Proton donor in catalysis. A substrate-binding site is contributed by 250 to 251; it reads NK.

The protein belongs to the EIF-2B alpha/beta/delta subunits family. DrdI subfamily.

The enzyme catalyses 5-deoxy-alpha-D-ribose 1-phosphate = 5-deoxy-D-ribulose 1-phosphate. The protein operates within carbohydrate degradation. Its function is as follows. Catalyzes the isomerization of 5-deoxy-alpha-D-ribose 1-phosphate to 5-deoxy-D-ribulose 1-phosphate, as part of a 5-deoxyribose salvage pathway that recycles this toxic radical SAM enzyme by-product to mainstream metabolites. This chain is 5-deoxyribose 1-phosphate isomerase, found in Clostridium botulinum (strain ATCC 19397 / Type A).